A 139-amino-acid chain; its full sequence is Thioredoxin 2 (139 aa).

Residues 5–18 fold into a zinc finger; it reads CTHCQAINRIPDDR. The region spanning 26 to 139 is the Thioredoxin domain; it reads GRCGHDLFDG…PFDSWLNESL (114 aa). A disulfide bridge connects residues Cys64 and Cys67.

This sequence belongs to the thioredoxin family.

It localises to the cytoplasm. It carries out the reaction [protein]-dithiol + NAD(+) = [protein]-disulfide + NADH + H(+). The catalysed reaction is [protein]-dithiol + NADP(+) = [protein]-disulfide + NADPH + H(+). Its function is as follows. Efficient electron donor for the essential enzyme ribonucleotide reductase. Is also able to reduce the interchain disulfide bridges of insulin. In Escherichia coli O6:H1 (strain CFT073 / ATCC 700928 / UPEC), this protein is Thioredoxin 2 (trxC).